The chain runs to 354 residues: 3-isopropylmalate dehydrogenase (354 aa).

Residue 76–87 (GPRWDGAKERPE) participates in NAD(+) binding. Substrate is bound by residues Arg94, Arg104, Arg130, and Asp215. Mg(2+) contacts are provided by Asp215, Asp239, and Asp243. 273–285 (GSAPDIAGKNKAN) contacts NAD(+).

Belongs to the isocitrate and isopropylmalate dehydrogenases family. LeuB type 1 subfamily. In terms of assembly, homodimer. Mg(2+) serves as cofactor. It depends on Mn(2+) as a cofactor.

Its subcellular location is the cytoplasm. It carries out the reaction (2R,3S)-3-isopropylmalate + NAD(+) = 4-methyl-2-oxopentanoate + CO2 + NADH. It functions in the pathway amino-acid biosynthesis; L-leucine biosynthesis; L-leucine from 3-methyl-2-oxobutanoate: step 3/4. Its function is as follows. Catalyzes the oxidation of 3-carboxy-2-hydroxy-4-methylpentanoate (3-isopropylmalate) to 3-carboxy-4-methyl-2-oxopentanoate. The product decarboxylates to 4-methyl-2 oxopentanoate. The sequence is that of 3-isopropylmalate dehydrogenase from Bacillus anthracis.